The primary structure comprises 265 residues: Type III pantothenate kinase (265 aa).

ATP is bound at residue 6-13 (DVGNTNIV). Residues Tyr100 and 107-110 (GADR) each bind substrate. Asp109 (proton acceptor) is an active-site residue. Position 129 (Asp129) interacts with K(+). Thr132 is a binding site for ATP. Residue Thr184 participates in substrate binding.

This sequence belongs to the type III pantothenate kinase family. Homodimer. NH4(+) serves as cofactor. The cofactor is K(+).

It localises to the cytoplasm. The enzyme catalyses (R)-pantothenate + ATP = (R)-4'-phosphopantothenate + ADP + H(+). Its pathway is cofactor biosynthesis; coenzyme A biosynthesis; CoA from (R)-pantothenate: step 1/5. Functionally, catalyzes the phosphorylation of pantothenate (Pan), the first step in CoA biosynthesis. This Alkaliphilus oremlandii (strain OhILAs) (Clostridium oremlandii (strain OhILAs)) protein is Type III pantothenate kinase.